The following is a 302-amino-acid chain: GrpE protein homolog 1, mitochondrial (302 aa).

Residues 1 to 39 (MLVSRVLSRVSRSAGLRSSFSSVVTPKRNQIPIVASRFH) constitute a mitochondrion transit peptide. A disordered region spans residues 77–97 (SAEPKGNESNTEVPKTGETSE).

This sequence belongs to the GrpE family. In terms of assembly, probable component of the PAM complex, at least composed of SSC1 (mtHsp70), MGE1, TIM44, PAM16/TIM16, PAM17 and PAM18/TIM14. Interacts with SSQ1.

Its subcellular location is the mitochondrion matrix. Its function is as follows. Essential component of the PAM complex, a complex required for the translocation of transit peptide-containing proteins from the inner membrane into the mitochondrial matrix in an ATP-dependent manner. Seems to control the nucleotide-dependent binding of mitochondrial HSP70 to substrate proteins. Binds ATP. Interacts with copper ions Cu(2+). This Arabidopsis thaliana (Mouse-ear cress) protein is GrpE protein homolog 1, mitochondrial.